Consider the following 366-residue polypeptide: tRNA(Met) cytidine acetate ligase (366 aa).

ATP-binding positions include Ile-7–Leu-20, Gly-101, Asn-145, and Arg-170.

The protein belongs to the TmcAL family.

It localises to the cytoplasm. The enzyme catalyses cytidine(34) in elongator tRNA(Met) + acetate + ATP = N(4)-acetylcytidine(34) in elongator tRNA(Met) + AMP + diphosphate. Functionally, catalyzes the formation of N(4)-acetylcytidine (ac(4)C) at the wobble position of elongator tRNA(Met), using acetate and ATP as substrates. First activates an acetate ion to form acetyladenylate (Ac-AMP) and then transfers the acetyl group to tRNA to form ac(4)C34. The chain is tRNA(Met) cytidine acetate ligase from Pediococcus pentosaceus (strain ATCC 25745 / CCUG 21536 / LMG 10740 / 183-1w).